A 49-amino-acid chain; its full sequence is IgW transmembrane form Tm2T7/Tm7T7/Tm3T3 (49 aa).

An N-linked (GlcNAc...) asparagine glycan is attached at Asn-3. The chain crosses the membrane as a helical span at residues 25 to 45 (VAAFAILFILSFLYSTFVTVV).

In terms of tissue distribution, expressed in the spleen. May also be expressed in other lymphoid tissues.

The protein resides in the membrane. This chain is IgW transmembrane form Tm2T7/Tm7T7/Tm3T3, found in Heterodontus francisci (Horn shark).